Consider the following 1145-residue polypeptide: Nucleolar protein 6 (1145 aa).

Residues 1–46 (MQKKRNRAGPPQQEAASDDGEMSDSSDKMEVAQGKGKSAVKRAPDA) are disordered.

This sequence belongs to the NRAP family. In terms of assembly, part of the small subunit (SSU) processome, composed of more than 70 proteins and the RNA chaperone small nucleolar RNA (snoRNA) U3.

Its subcellular location is the nucleus. The protein localises to the nucleolus. It is found in the chromosome. Its function is as follows. Part of the small subunit (SSU) processome, first precursor of the small eukaryotic ribosomal subunit. During the assembly of the SSU processome in the nucleolus, many ribosome biogenesis factors, an RNA chaperone and ribosomal proteins associate with the nascent pre-rRNA and work in concert to generate RNA folding, modifications, rearrangements and cleavage as well as targeted degradation of pre-ribosomal RNA by the RNA exosome. This is Nucleolar protein 6 (nol6) from Xenopus tropicalis (Western clawed frog).